Consider the following 513-residue polypeptide: Sphingosine-1-phosphate transporter SPNS2 (513 aa).

The next 11 helical transmembrane spans lie at 102-122 (GLLQTVFICSFMVAAPIFGYL), 130-150 (VILSSGIFFWSAITFSSSFIP), 163-183 (LVGIGEASYSTIAPTIIGDLF), 190-210 (LMLSVFYFAIPLGSGLGYITG), 222-242 (WALRVSPVLGVITGTLLLIFV), 276-296 (LATSTVSFATGALGMWIPLYL), 320-340 (LIFGAITCLTGFLGVIIGAGA), 354-374 (LVCAVGMLGSAIFICLVFVAA), 378-398 (IIAAYICIFAGETLLFSNWAI), 422-442 (TSHLLGDAGSPYLIGFISDLI), and 463-483 (LCPFVVVLGGMFFLATALFFL).

This sequence belongs to the major facilitator superfamily. Spinster (TC 2.A.1.49) family.

It localises to the cell membrane. It is found in the endosome membrane. The catalysed reaction is sphing-4-enine 1-phosphate(in) = sphing-4-enine 1-phosphate(out). The enzyme catalyses sphinganine 1-phosphate(in) = sphinganine 1-phosphate(out). Functionally, lipid transporter that specifically mediates export of sphingosine-1-phosphate (sphing-4-enine 1-phosphate, S1P) and sphinganine-1-phosphate. The polypeptide is Sphingosine-1-phosphate transporter SPNS2 (spns2) (Xenopus tropicalis (Western clawed frog)).